Reading from the N-terminus, the 259-residue chain is Ubiquinone/menaquinone biosynthesis C-methyltransferase UbiE (259 aa).

S-adenosyl-L-methionine-binding positions include threonine 82, aspartate 103, 131–132 (NA), and serine 148.

It belongs to the class I-like SAM-binding methyltransferase superfamily. MenG/UbiE family.

The catalysed reaction is a 2-demethylmenaquinol + S-adenosyl-L-methionine = a menaquinol + S-adenosyl-L-homocysteine + H(+). It carries out the reaction a 2-methoxy-6-(all-trans-polyprenyl)benzene-1,4-diol + S-adenosyl-L-methionine = a 5-methoxy-2-methyl-3-(all-trans-polyprenyl)benzene-1,4-diol + S-adenosyl-L-homocysteine + H(+). It participates in quinol/quinone metabolism; menaquinone biosynthesis; menaquinol from 1,4-dihydroxy-2-naphthoate: step 2/2. It functions in the pathway cofactor biosynthesis; ubiquinone biosynthesis. In terms of biological role, methyltransferase required for the conversion of demethylmenaquinol (DMKH2) to menaquinol (MKH2) and the conversion of 2-polyprenyl-6-methoxy-1,4-benzoquinol (DDMQH2) to 2-polyprenyl-3-methyl-6-methoxy-1,4-benzoquinol (DMQH2). The sequence is that of Ubiquinone/menaquinone biosynthesis C-methyltransferase UbiE from Haemophilus ducreyi (strain 35000HP / ATCC 700724).